The chain runs to 885 residues: Alanine--tRNA ligase (885 aa).

Residues H564, H568, C676, and H680 each coordinate Zn(2+).

Belongs to the class-II aminoacyl-tRNA synthetase family. Zn(2+) is required as a cofactor.

The protein localises to the cytoplasm. It catalyses the reaction tRNA(Ala) + L-alanine + ATP = L-alanyl-tRNA(Ala) + AMP + diphosphate. Functionally, catalyzes the attachment of alanine to tRNA(Ala) in a two-step reaction: alanine is first activated by ATP to form Ala-AMP and then transferred to the acceptor end of tRNA(Ala). Also edits incorrectly charged Ser-tRNA(Ala) and Gly-tRNA(Ala) via its editing domain. This Brucella ovis (strain ATCC 25840 / 63/290 / NCTC 10512) protein is Alanine--tRNA ligase.